The chain runs to 87 residues: Large ribosomal subunit protein bL31B (87 aa).

This sequence belongs to the bacterial ribosomal protein bL31 family. Type B subfamily. In terms of assembly, part of the 50S ribosomal subunit.

This Escherichia coli O9:H4 (strain HS) protein is Large ribosomal subunit protein bL31B.